The primary structure comprises 183 residues: Protein FAM180B (183 aa).

The first 23 residues, 1-23 (MAATLQFLVCLVVAICLLSGVTT), serve as a signal peptide directing secretion.

This sequence belongs to the FAM180 family.

It is found in the secreted. This Homo sapiens (Human) protein is Protein FAM180B (FAM180B).